Consider the following 351-residue polypeptide: Dual-specificity RNA methyltransferase RlmN (351 aa).

Residue glutamate 90 is the Proton acceptor of the active site. The Radical SAM core domain maps to 96 to 330 (EKDHYTACLS…ATLRKSKGSD (235 aa)). A disulfide bridge connects residues cysteine 103 and cysteine 335. [4Fe-4S] cluster is bound by residues cysteine 110, cysteine 114, and cysteine 117. Residues 162 to 163 (GE), serine 194, 216 to 218 (SLH), and asparagine 292 each bind S-adenosyl-L-methionine. The active-site S-methylcysteine intermediate is the cysteine 335.

This sequence belongs to the radical SAM superfamily. RlmN family. [4Fe-4S] cluster serves as cofactor.

Its subcellular location is the cytoplasm. The enzyme catalyses adenosine(2503) in 23S rRNA + 2 reduced [2Fe-2S]-[ferredoxin] + 2 S-adenosyl-L-methionine = 2-methyladenosine(2503) in 23S rRNA + 5'-deoxyadenosine + L-methionine + 2 oxidized [2Fe-2S]-[ferredoxin] + S-adenosyl-L-homocysteine. The catalysed reaction is adenosine(37) in tRNA + 2 reduced [2Fe-2S]-[ferredoxin] + 2 S-adenosyl-L-methionine = 2-methyladenosine(37) in tRNA + 5'-deoxyadenosine + L-methionine + 2 oxidized [2Fe-2S]-[ferredoxin] + S-adenosyl-L-homocysteine. Functionally, specifically methylates position 2 of adenine 2503 in 23S rRNA and position 2 of adenine 37 in tRNAs. m2A2503 modification seems to play a crucial role in the proofreading step occurring at the peptidyl transferase center and thus would serve to optimize ribosomal fidelity. The polypeptide is Dual-specificity RNA methyltransferase RlmN (Solidesulfovibrio magneticus (strain ATCC 700980 / DSM 13731 / RS-1) (Desulfovibrio magneticus)).